Reading from the N-terminus, the 153-residue chain is UPF0260 protein YcgN (153 aa).

The protein belongs to the UPF0260 family.

The polypeptide is UPF0260 protein YcgN (Shigella boydii serotype 18 (strain CDC 3083-94 / BS512)).